Here is a 287-residue protein sequence, read N- to C-terminus: Diaminopimelate epimerase (287 aa).

Residues Asn13, Gln46, and Asn66 each coordinate substrate. The active-site Proton donor is Cys75. Residues 76–77 (GN), Asn166, Asn199, and 217–218 (ER) each bind substrate. Cys226 acts as the Proton acceptor in catalysis. Substrate is bound at residue 227–228 (GT).

The protein belongs to the diaminopimelate epimerase family. In terms of assembly, homodimer.

It is found in the cytoplasm. The catalysed reaction is (2S,6S)-2,6-diaminopimelate = meso-2,6-diaminopimelate. It functions in the pathway amino-acid biosynthesis; L-lysine biosynthesis via DAP pathway; DL-2,6-diaminopimelate from LL-2,6-diaminopimelate: step 1/1. In terms of biological role, catalyzes the stereoinversion of LL-2,6-diaminopimelate (L,L-DAP) to meso-diaminopimelate (meso-DAP), a precursor of L-lysine and an essential component of the bacterial peptidoglycan. This Paraburkholderia xenovorans (strain LB400) protein is Diaminopimelate epimerase.